A 434-amino-acid polypeptide reads, in one-letter code: RNA polymerase II holoenzyme cyclin-like subunit (434 aa).

Residues 23–155 (EARRRVLLLE…LIEEMDSYLL (133 aa)) enclose the Cyclin N-terminal domain. A compositionally biased stretch (low complexity) spans 248–278 (GSSTNPININNNNNTNTSNNNGTTSTTTTTT). 3 disordered regions span residues 248-292 (GSST…DNTE), 301-320 (LTKS…DIDN), and 330-362 (QIQN…GQIS). The span at 330-359 (QIQNQTQHQHQESTHNNTSSTNTGRNGING) shows a compositional bias: low complexity.

This sequence belongs to the cyclin family. Cyclin C subfamily. Component of the SRB8-11 complex, a regulatory module of the Mediator complex.

It localises to the nucleus. Component of the SRB8-11 complex. The SRB8-11 complex is a regulatory module of the Mediator complex which is itself involved in regulation of basal and activated RNA polymerase II-dependent transcription. The SRB8-11 complex may be involved in the transcriptional repression of a subset of genes regulated by Mediator. It may inhibit the association of the Mediator complex with RNA polymerase II to form the holoenzyme complex. The SRB8-11 complex phosphorylates the C-terminal domain (CTD) of the largest subunit of RNA polymerase II. In Candida albicans (strain SC5314 / ATCC MYA-2876) (Yeast), this protein is RNA polymerase II holoenzyme cyclin-like subunit (SSN8).